A 230-amino-acid chain; its full sequence is MIQLSNVRKSYQIGKETFDVLHSIDLDIHQGEYVSIMGPSGSGKSTIMNIIGCLDRPTSGTYQLDGEDISSYKDKELAAVRNRSIGFVFQQFQLLPRLNAKKNVELPMIYSGIGKKERQERAERALEKVGLADRMLHMPNELSGGQKQRVAIARAIVNEPKLILADEPTGALDTKTSEAIMDQFTALNAEGTTIVLVTHEPEVADCTNRIVMVRDGNIVPASSGQRSVGE.

Positions 2–230 (IQLSNVRKSY…ASSGQRSVGE (229 aa)) constitute an ABC transporter domain. ATP is bound at residue 38-45 (GPSGSGKS).

Belongs to the ABC transporter superfamily. In terms of assembly, part of a complex composed of YknX, YknY and YknZ. The complex interacts with YknW.

It localises to the cell membrane. Its function is as follows. Part of an unusual four-component transporter, which is required for protection against the killing factor SdpC (sporulation-delaying protein). This is an uncharacterized protein from Bacillus subtilis (strain 168).